The chain runs to 579 residues: ATP-dependent lipid A-core flippase (579 aa).

A run of 4 helical transmembrane segments spans residues 24–44 (FLAA…LAEM), 61–81 (LMLP…TFLG), 147–167 (LFVI…TLIF), and 253–273 (LLVA…ALMA). The ABC transmembrane type-1 domain maps to 25–306 (LAAVVGYAIY…LTEVNSTIQK (282 aa)). One can recognise an ABC transporter domain in the interval 338-573 (VRFEGVRFRY…DGAYAALHQL (236 aa)). 372 to 379 (GRSGSGKS) provides a ligand contact to ATP.

It belongs to the ABC transporter superfamily. Lipid exporter (TC 3.A.1.106) family. Homodimer.

Its subcellular location is the cell inner membrane. It carries out the reaction ATP + H2O + lipid A-core oligosaccharideSide 1 = ADP + phosphate + lipid A-core oligosaccharideSide 2.. In terms of biological role, involved in lipopolysaccharide (LPS) biosynthesis. Translocates lipid A-core from the inner to the outer leaflet of the inner membrane. Transmembrane domains (TMD) form a pore in the inner membrane and the ATP-binding domain (NBD) is responsible for energy generation. The polypeptide is ATP-dependent lipid A-core flippase (Chromohalobacter salexigens (strain ATCC BAA-138 / DSM 3043 / CIP 106854 / NCIMB 13768 / 1H11)).